A 351-amino-acid polypeptide reads, in one-letter code: Photosystem II D2 protein (351 aa).

The chain crosses the membrane as a helical span at residues 39–59 (TAYLAIGGWLTGTTFVTSWYT). Position 116 (H116) interacts with chlorophyll a. A helical transmembrane segment spans residues 123 to 139 (GFMLRQFEISRLVGIRP). Pheophytin a-binding residues include Q128 and N141. A helical transmembrane segment spans residues 151-164 (VFVSVFLIYPLGQS). Chlorophyll a is bound at residue H196. A helical transmembrane segment spans residues 206–226 (GALLSAIHGVTVENTLYEDGE). A plastoquinone is bound by residues H213 and F260. A Fe cation-binding site is contributed by H213. H267 serves as a coordination point for Fe cation. The helical transmembrane segment at 277-293 (GLWTSSIGIIGLALNLR) threads the bilayer.

It belongs to the reaction center PufL/M/PsbA/D family. In terms of assembly, PSII is composed of 1 copy each of membrane proteins PsbA, PsbB, PsbC, PsbD, PsbE, PsbF, PsbH, PsbI, PsbJ, PsbK, PsbL, PsbM, PsbT, PsbX, PsbY, PsbZ, Psb30/Ycf12, peripheral proteins PsbO, CyanoQ (PsbQ), PsbU, PsbV and a large number of cofactors. It forms dimeric complexes. Requires The D1/D2 heterodimer binds P680, chlorophylls that are the primary electron donor of PSII, and subsequent electron acceptors. It shares a non-heme iron and each subunit binds pheophytin, quinone, additional chlorophylls, carotenoids and lipids. There is also a Cl(-1) ion associated with D1 and D2, which is required for oxygen evolution. The PSII complex binds additional chlorophylls, carotenoids and specific lipids. as cofactor.

Its subcellular location is the host cellular thylakoid membrane. It carries out the reaction 2 a plastoquinone + 4 hnu + 2 H2O = 2 a plastoquinol + O2. Functionally, photosystem II (PSII) is a light-driven water:plastoquinone oxidoreductase that uses light energy to abstract electrons from H(2)O, generating O(2) and a proton gradient subsequently used for ATP formation. It consists of a core antenna complex that captures photons, and an electron transfer chain that converts photonic excitation into a charge separation. The D1/D2 (PsbA/PsbD) reaction center heterodimer binds P680, the primary electron donor of PSII as well as several subsequent electron acceptors. D2 is needed for assembly of a stable PSII complex. The sequence is that of Photosystem II D2 protein (psbD) from Synechococcus.